The following is a 653-amino-acid chain: Thioredoxin domain-containing protein 3 homolog (653 aa).

The 106-residue stretch at 9-114 (LQETLNTQEA…QETIQETLKN (106 aa)) folds into the Thioredoxin domain. An intrachain disulfide couples cysteine 38 to cysteine 41. Positions 155-299 (KQITVALIKP…FFFPDFKPPT (145 aa)) are NDK 1. The disordered stretch occupies residues 300–323 (YRSAKSAASRASGRRSKTPSQKPR). The span at 301 to 310 (RSAKSAASRA) shows a compositional bias: low complexity. NDK stretches follow at residues 324–459 (LQRT…IFHV) and 459–597 (VEQT…QFDW). The tract at residues 603 to 653 (QAEEGEVNETSGEQPTDEQSGETEKTEEDGEHEGAQSDQQQAVSEAMEKEE) is disordered. The segment covering 617-633 (PTDEQSGETEKTEEDGE) has biased composition (acidic residues).

In the C-terminal section; belongs to the NDK family. Testis-specific.

May be required during the final stages of sperm tail maturation. May act by reducing disulfide bonds within the sperm components. This is Thioredoxin domain-containing protein 3 homolog (CiIC3) from Ciona intestinalis (Transparent sea squirt).